A 620-amino-acid polypeptide reads, in one-letter code: Chaperone protein HscA homolog (620 aa).

Belongs to the heat shock protein 70 family.

In terms of biological role, chaperone involved in the maturation of iron-sulfur cluster-containing proteins. Has a low intrinsic ATPase activity which is markedly stimulated by HscB. The chain is Chaperone protein HscA homolog from Bordetella pertussis (strain Tohama I / ATCC BAA-589 / NCTC 13251).